A 159-amino-acid chain; its full sequence is Cytochrome c-type biogenesis protein CcmE (159 aa).

The Cytoplasmic portion of the chain corresponds to 1–8 (MNLRRKNR). A helical; Signal-anchor for type II membrane protein membrane pass occupies residues 9–29 (LWVVCAVLAGLALTTALVLYA). The Periplasmic portion of the chain corresponds to 30–159 (LRANIDLFYT…PQRADKDTSS (130 aa)). The tract at residues 129–159 (KHDENYTPPEVEKAMQENHRRPQRADKDTSS) is disordered. Heme-binding residues include His-130 and Tyr-134.

This sequence belongs to the CcmE/CycJ family.

The protein resides in the cell inner membrane. In terms of biological role, heme chaperone required for the biogenesis of c-type cytochromes. Transiently binds heme delivered by CcmC and transfers the heme to apo-cytochromes in a process facilitated by CcmF and CcmH. In Salmonella paratyphi A (strain ATCC 9150 / SARB42), this protein is Cytochrome c-type biogenesis protein CcmE.